Consider the following 426-residue polypeptide: Serine hydroxymethyltransferase (426 aa).

(6S)-5,6,7,8-tetrahydrofolate is bound by residues Leu113 and 117-119 (GHL). Lys222 bears the N6-(pyridoxal phosphate)lysine mark. 363–365 (SAF) lines the (6S)-5,6,7,8-tetrahydrofolate pocket.

It belongs to the SHMT family. As to quaternary structure, homodimer. Pyridoxal 5'-phosphate serves as cofactor.

Its subcellular location is the cytoplasm. The enzyme catalyses (6R)-5,10-methylene-5,6,7,8-tetrahydrofolate + glycine + H2O = (6S)-5,6,7,8-tetrahydrofolate + L-serine. It functions in the pathway one-carbon metabolism; tetrahydrofolate interconversion. The protein operates within amino-acid biosynthesis; glycine biosynthesis; glycine from L-serine: step 1/1. Functionally, catalyzes the reversible interconversion of serine and glycine with tetrahydrofolate (THF) serving as the one-carbon carrier. This reaction serves as the major source of one-carbon groups required for the biosynthesis of purines, thymidylate, methionine, and other important biomolecules. Also exhibits THF-independent aldolase activity toward beta-hydroxyamino acids, producing glycine and aldehydes, via a retro-aldol mechanism. This Phocaeicola vulgatus (strain ATCC 8482 / DSM 1447 / JCM 5826 / CCUG 4940 / NBRC 14291 / NCTC 11154) (Bacteroides vulgatus) protein is Serine hydroxymethyltransferase.